A 267-amino-acid chain; its full sequence is Ribosomal RNA small subunit methyltransferase A (267 aa).

S-adenosyl-L-methionine contacts are provided by asparagine 16, leucine 18, glycine 43, glutamate 64, aspartate 89, and asparagine 110.

This sequence belongs to the class I-like SAM-binding methyltransferase superfamily. rRNA adenine N(6)-methyltransferase family. RsmA subfamily.

Its subcellular location is the cytoplasm. It carries out the reaction adenosine(1518)/adenosine(1519) in 16S rRNA + 4 S-adenosyl-L-methionine = N(6)-dimethyladenosine(1518)/N(6)-dimethyladenosine(1519) in 16S rRNA + 4 S-adenosyl-L-homocysteine + 4 H(+). Specifically dimethylates two adjacent adenosines (A1518 and A1519) in the loop of a conserved hairpin near the 3'-end of 16S rRNA in the 30S particle. May play a critical role in biogenesis of 30S subunits. The polypeptide is Ribosomal RNA small subunit methyltransferase A (Pseudomonas putida (strain ATCC 47054 / DSM 6125 / CFBP 8728 / NCIMB 11950 / KT2440)).